Reading from the N-terminus, the 667-residue chain is Long-chain fatty acid transport protein 3 (667 aa).

Residues 3 to 23 traverse the membrane as a helical segment; that stretch reads ALLLLLPLLLLLPLLLKLDVW. The disordered stretch occupies residues 114–144; it reads TGGRRGSGRGSTEEGARVAPPAGDAAARGTT. Low complexity predominate over residues 130–144; the sequence is RVAPPAGDAAARGTT. ATP is bound by residues 272-276, His315, Thr412, Asp512, Arg527, and Lys619; that span reads TSGTT.

This sequence belongs to the ATP-dependent AMP-binding enzyme family. Expressed at high levels in adrenal gland, testis and ovary. Expressed at lower levels in adult brain. Found in adrenal cortical cells, spermatocytes and interstitial cells of the testis, theca cells of the ovary, cerebral cortical neurons, and cerebellar Purkinje cells (at protein level).

Its subcellular location is the mitochondrion membrane. It catalyses the reaction a fatty acid(in) = a fatty acid(out). The enzyme catalyses a long-chain fatty acid + ATP + CoA = a long-chain fatty acyl-CoA + AMP + diphosphate. The catalysed reaction is (5Z,8Z,11Z,14Z)-eicosatetraenoate + ATP + CoA = (5Z,8Z,11Z,14Z)-eicosatetraenoyl-CoA + AMP + diphosphate. It carries out the reaction hexadecanoate + ATP + CoA = hexadecanoyl-CoA + AMP + diphosphate. It catalyses the reaction (9Z)-octadecenoate + ATP + CoA = (9Z)-octadecenoyl-CoA + AMP + diphosphate. The enzyme catalyses (9Z,12Z)-octadecadienoate + ATP + CoA = (9Z,12Z)-octadecadienoyl-CoA + AMP + diphosphate. The catalysed reaction is a very long-chain fatty acid + ATP + CoA = a very long-chain fatty acyl-CoA + AMP + diphosphate. It carries out the reaction tetracosanoate + ATP + CoA = tetracosanoyl-CoA + AMP + diphosphate. Its function is as follows. Mainly functions as an acyl-CoA ligase catalyzing the ATP-dependent formation of fatty acyl-CoA using LCFA and very-long-chain fatty acids (VLCFA) as substrates. Can mediate the levels of long-chain fatty acids (LCFA) in the cell by facilitating their transport across membranes. The chain is Long-chain fatty acid transport protein 3 (Slc27a3) from Mus musculus (Mouse).